The sequence spans 339 residues: Ketol-acid reductoisomerase (NADP(+)) (339 aa).

A KARI N-terminal Rossmann domain is found at 1-182 (MRVYYDRDAD…GGGRAGIIET (182 aa)). Residues 24–27 (YGSQ), Arg-48, Ser-51, Thr-53, and 83–86 (DELQ) contribute to the NADP(+) site. His-108 is a catalytic residue. Gly-134 serves as a coordination point for NADP(+). In terms of domain architecture, KARI C-terminal knotted spans 183-328 (TFKEECETDL…AKLRGMMPWI (146 aa)). The Mg(2+) site is built by Asp-191, Glu-195, Glu-227, and Glu-231. Residue Ser-252 coordinates substrate.

It belongs to the ketol-acid reductoisomerase family. Mg(2+) serves as cofactor.

The catalysed reaction is (2R)-2,3-dihydroxy-3-methylbutanoate + NADP(+) = (2S)-2-acetolactate + NADPH + H(+). The enzyme catalyses (2R,3R)-2,3-dihydroxy-3-methylpentanoate + NADP(+) = (S)-2-ethyl-2-hydroxy-3-oxobutanoate + NADPH + H(+). It functions in the pathway amino-acid biosynthesis; L-isoleucine biosynthesis; L-isoleucine from 2-oxobutanoate: step 2/4. It participates in amino-acid biosynthesis; L-valine biosynthesis; L-valine from pyruvate: step 2/4. Its function is as follows. Involved in the biosynthesis of branched-chain amino acids (BCAA). Catalyzes an alkyl-migration followed by a ketol-acid reduction of (S)-2-acetolactate (S2AL) to yield (R)-2,3-dihydroxy-isovalerate. In the isomerase reaction, S2AL is rearranged via a Mg-dependent methyl migration to produce 3-hydroxy-3-methyl-2-ketobutyrate (HMKB). In the reductase reaction, this 2-ketoacid undergoes a metal-dependent reduction by NADPH to yield (R)-2,3-dihydroxy-isovalerate. The sequence is that of Ketol-acid reductoisomerase (NADP(+)) from Methylorubrum extorquens (strain CM4 / NCIMB 13688) (Methylobacterium extorquens).